The following is a 66-amino-acid chain: Photosystem II reaction center protein H (66 aa).

Residues 27-47 form a helical membrane-spanning segment; sequence GAVPVMTVIGLLLLVFLVILL.

This sequence belongs to the PsbH family. PSII is composed of 1 copy each of membrane proteins PsbA, PsbB, PsbC, PsbD, PsbE, PsbF, PsbH, PsbI, PsbJ, PsbK, PsbL, PsbM, PsbT, PsbX, PsbY, Psb30/Ycf12, peripheral proteins PsbO, CyanoQ (PsbQ), PsbU, PsbV and a large number of cofactors. It forms dimeric complexes.

The protein localises to the cellular thylakoid membrane. One of the components of the core complex of photosystem II (PSII), required for its stability and/or assembly. PSII is a light-driven water:plastoquinone oxidoreductase that uses light energy to abstract electrons from H(2)O, generating O(2) and a proton gradient subsequently used for ATP formation. It consists of a core antenna complex that captures photons, and an electron transfer chain that converts photonic excitation into a charge separation. The sequence is that of Photosystem II reaction center protein H from Prochlorococcus marinus (strain MIT 9215).